The chain runs to 739 residues: Phosphoribosylformylglycinamidine synthase subunit PurL (739 aa).

Residue H53 is part of the active site. The ATP site is built by Y56 and K95. E97 contacts Mg(2+). Residues 98–101 (SHNH) and R120 contribute to the substrate site. Residue H99 is the Proton acceptor of the active site. D121 serves as a coordination point for Mg(2+). Q244 is a substrate binding site. A Mg(2+)-binding site is contributed by D274. Position 318–320 (318–320 (ESQ)) interacts with substrate. Residues D501 and G538 each coordinate ATP. N539 is a Mg(2+) binding site. Position 541 (S541) interacts with substrate.

It belongs to the FGAMS family. In terms of assembly, monomer. Part of the FGAM synthase complex composed of 1 PurL, 1 PurQ and 2 PurS subunits.

The protein resides in the cytoplasm. It catalyses the reaction N(2)-formyl-N(1)-(5-phospho-beta-D-ribosyl)glycinamide + L-glutamine + ATP + H2O = 2-formamido-N(1)-(5-O-phospho-beta-D-ribosyl)acetamidine + L-glutamate + ADP + phosphate + H(+). Its pathway is purine metabolism; IMP biosynthesis via de novo pathway; 5-amino-1-(5-phospho-D-ribosyl)imidazole from N(2)-formyl-N(1)-(5-phospho-D-ribosyl)glycinamide: step 1/2. Functionally, part of the phosphoribosylformylglycinamidine synthase complex involved in the purines biosynthetic pathway. Catalyzes the ATP-dependent conversion of formylglycinamide ribonucleotide (FGAR) and glutamine to yield formylglycinamidine ribonucleotide (FGAM) and glutamate. The FGAM synthase complex is composed of three subunits. PurQ produces an ammonia molecule by converting glutamine to glutamate. PurL transfers the ammonia molecule to FGAR to form FGAM in an ATP-dependent manner. PurS interacts with PurQ and PurL and is thought to assist in the transfer of the ammonia molecule from PurQ to PurL. In Listeria innocua serovar 6a (strain ATCC BAA-680 / CLIP 11262), this protein is Phosphoribosylformylglycinamidine synthase subunit PurL.